Here is a 146-residue protein sequence, read N- to C-terminus: Cystatin-C (146 aa).

An N-terminal signal peptide occupies residues 1-26 (MAGPLRAPLLLLAILAVALAVSPAAG). Serine 43 carries the post-translational modification Phosphoserine. The short motif at 81 to 85 (QIVAG) is the Secondary area of contact element. 2 disulfide bridges follow: cysteine 99–cysteine 109 and cysteine 123–cysteine 143.

It belongs to the cystatin family.

The protein resides in the secreted. Its function is as follows. As an inhibitor of cysteine proteinases, this protein is thought to serve an important physiological role as a local regulator of this enzyme activity. The polypeptide is Cystatin-C (CST3) (Macaca mulatta (Rhesus macaque)).